The chain runs to 342 residues: dTDP-3,4-didehydro-2,6-dideoxy-alpha-D-glucose 3-reductase (342 aa).

19–25 (CADIALR) is a binding site for NADP(+). Residue Arg-26 coordinates substrate. NADP(+) contacts are provided by residues 44 to 45 (SR), Tyr-65, Leu-81, and His-86. Residue Lys-104 is the Proton donor of the active site. NADP(+) is bound by residues Arg-172 and Asp-184. Residues Tyr-243 and Ser-263 each coordinate substrate.

This sequence belongs to the Gfo/Idh/MocA family.

It catalyses the reaction dTDP-4-dehydro-2,6-dideoxy-alpha-D-glucose + NADP(+) = dTDP-3,4-didehydro-2,6-dideoxy-alpha-D-glucose + NADPH + H(+). The protein operates within antibiotic biosynthesis; granaticin biosynthesis. Functionally, involved in the biosynthesis of the 2,6-deoxysugar, dTDP-L-rhodinose, attached to the benzoisochromane quinone chromophore to produce the aglycone antibiotics granaticin and granaticin B. Catalyzes the reduction of the C-3 keto moiety of dTDP-3,4-diketo-2,6-dideoxy-alpha-D-glucose to yield dTDP-4-keto-2,6-dideoxy-alpha-D-glucose. NADPH is the better reductant, however NADH can also be used. The polypeptide is dTDP-3,4-didehydro-2,6-dideoxy-alpha-D-glucose 3-reductase (Streptomyces violaceoruber).